The chain runs to 172 residues: Transcription factor E (172 aa).

One can recognise an HTH TFE/IIEalpha-type domain in the interval 8–90 (DDPVVQKYLH…LWTFQYENVP (83 aa)).

This sequence belongs to the TFE family. Monomer. Interaction with RNA polymerase subunits RpoF and RpoE is necessary for Tfe stimulatory transcription activity. Able to interact with Tbp and RNA polymerase in the absence of DNA promoter. Interacts both with the preinitiation and elongation complexes.

Its function is as follows. Transcription factor that plays a role in the activation of archaeal genes transcribed by RNA polymerase. Facilitates transcription initiation by enhancing TATA-box recognition by TATA-box-binding protein (Tbp), and transcription factor B (Tfb) and RNA polymerase recruitment. Not absolutely required for transcription in vitro, but particularly important in cases where Tbp or Tfb function is not optimal. It dynamically alters the nucleic acid-binding properties of RNA polymerases by stabilizing the initiation complex and destabilizing elongation complexes. Seems to translocate with the RNA polymerase following initiation and acts by binding to the non template strand of the transcription bubble in elongation complexes. This is Transcription factor E from Halobacterium salinarum (strain ATCC 700922 / JCM 11081 / NRC-1) (Halobacterium halobium).